The chain runs to 504 residues: D-alanine--D-alanyl carrier protein ligase (504 aa).

152–153 (TS) provides a ligand contact to ATP. Asp197 is a binding site for D-alanine. 292 to 297 (NTYGPT) serves as a coordination point for ATP. Val301 contacts D-alanine. Residues Asp383, 394–397 (YNGR), and Lys492 each bind ATP. Lys492 lines the D-alanine pocket.

This sequence belongs to the ATP-dependent AMP-binding enzyme family. DltA subfamily.

It is found in the cytoplasm. The enzyme catalyses holo-[D-alanyl-carrier protein] + D-alanine + ATP = D-alanyl-[D-alanyl-carrier protein] + AMP + diphosphate. It participates in cell wall biogenesis; lipoteichoic acid biosynthesis. Catalyzes the first step in the D-alanylation of lipoteichoic acid (LTA), the activation of D-alanine and its transfer onto the D-alanyl carrier protein (Dcp) DltC. In an ATP-dependent two-step reaction, forms a high energy D-alanyl-AMP intermediate, followed by transfer of the D-alanyl residue as a thiol ester to the phosphopantheinyl prosthetic group of the Dcp. D-alanylation of LTA plays an important role in modulating the properties of the cell wall in Gram-positive bacteria, influencing the net charge of the cell wall. The protein is D-alanine--D-alanyl carrier protein ligase of Bacillus thuringiensis (strain Al Hakam).